We begin with the raw amino-acid sequence, 511 residues long: Lysine--tRNA ligase 2 (511 aa).

A compositionally biased stretch (polar residues) spans 1 to 11 (MTMEINNTDPS). A disordered region spans residues 1 to 21 (MTMEINNTDPSENMPLPDDVD). Mg(2+)-binding residues include Glu-421 and Glu-428.

This sequence belongs to the class-II aminoacyl-tRNA synthetase family. Homodimer. Requires Mg(2+) as cofactor.

It is found in the cytoplasm. The catalysed reaction is tRNA(Lys) + L-lysine + ATP = L-lysyl-tRNA(Lys) + AMP + diphosphate. This is Lysine--tRNA ligase 2 from Methanosarcina acetivorans (strain ATCC 35395 / DSM 2834 / JCM 12185 / C2A).